The following is a 453-amino-acid chain: Lipase 9 (453 aa).

The signal sequence occupies residues 1 to 14 (MLYLILFLIAPIYA). Asn-36 is a glycosylation site (N-linked (GlcNAc...) asparagine). Cysteines 110 and 281 form a disulfide. The active-site Charge relay system is the Ser-194. N-linked (GlcNAc...) asparagine glycosylation is found at Asn-229, Asn-266, and Asn-269. Residues Asp-343 and His-376 each act as charge relay system in the active site. Cys-359 and Cys-404 are joined by a disulfide. Residue Asn-417 is glycosylated (N-linked (GlcNAc...) asparagine).

The protein belongs to the AB hydrolase superfamily. Lipase family. Class Lip subfamily.

The protein resides in the secreted. The catalysed reaction is a triacylglycerol + H2O = a diacylglycerol + a fatty acid + H(+). Its function is as follows. Secreted lipase that is able to hydrolyze both the neutral triacylglycerols and the monopalmitate ester Tween 40, allowing the use of hydrolyzed products as carbon sources. Has broad lipolytic activity, which may be important for colonization and subsequent infection, therefore contributing to the persistence and virulence in human tissue. The protein is Lipase 9 of Candida albicans (strain SC5314 / ATCC MYA-2876) (Yeast).